A 471-amino-acid chain; its full sequence is Trigger factor (471 aa).

The region spanning 171 to 262 (GDLAIVDYAA…LKEIKFRELP (92 aa)) is the PPIase FKBP-type domain. The segment at 440–471 (PEGSLSQTEEDTPDDDAEEEAIVDVEATSDEE) is disordered. Acidic residues predominate over residues 447 to 471 (TEEDTPDDDAEEEAIVDVEATSDEE).

Belongs to the FKBP-type PPIase family. Tig subfamily.

Its subcellular location is the cytoplasm. It carries out the reaction [protein]-peptidylproline (omega=180) = [protein]-peptidylproline (omega=0). Involved in protein export. Acts as a chaperone by maintaining the newly synthesized protein in an open conformation. Functions as a peptidyl-prolyl cis-trans isomerase. This is Trigger factor (tig) from Synechocystis sp. (strain ATCC 27184 / PCC 6803 / Kazusa).